The following is a 346-amino-acid chain: Membrane progestin receptor alpha (346 aa).

Residues 1–72 (MAMAQKLSHL…RTLFQQHNEA (72 aa)) are Cytoplasmic-facing. Residues 73–93 (VNVWTHLLAALVLLLRLALFV) traverse the membrane as a helical segment. Topologically, residues 94–103 (ETVDFWGDPH) are extracellular. The helical transmembrane segment at 104-124 (ALPLFIIVLASFTYLSFSALA) threads the bilayer. The Cytoplasmic segment spans residues 125–137 (HLLQAKSEFWHYS). Residues 138–158 (FFFLDYVGVAVYQFGSALAHF) form a helical membrane-spanning segment. Over 159–169 (YYAIEPAWHAQ) the chain is Extracellular. The chain crosses the membrane as a helical span at residues 170 to 190 (VQAVFLPMAAFLAWLSCIGSC). Over 191–237 (YNKYIQKPGLLGRTCQEVPSVLAYALDISPVVHRIFVSSDPTTDDPA) the chain is Cytoplasmic. Residues 238 to 258 (LLYHKCQVVFFLLAAAFFSTF) form a helical membrane-spanning segment. Residues 259 to 276 (MPERWFPGSCHVFGQGHQ) are Extracellular-facing. The chain crosses the membrane as a helical span at residues 277–297 (LFHIFLVLCTLAQLEAVALDY). Residues 298 to 316 (EARRPIYEPLHTHWPHNFS) are Cytoplasmic-facing. Residues 317–337 (GLFLLTVGSSILTAFLLSQLV) traverse the membrane as a helical segment. Topologically, residues 338 to 346 (QRKLDQKTK) are extracellular.

It belongs to the ADIPOR family. As to expression, expressed in a wide range of tissues including ovary, testis, placenta, uterus and bladder.

Its subcellular location is the cell membrane. Plasma membrane progesterone (P4) receptor coupled to G proteins. Seems to act through a G(i) mediated pathway. May be involved in oocyte maturation. Involved in neurosteroid inhibition of apoptosis. Also binds dehydroepiandrosterone (DHEA), pregnanolone, pregnenolone and allopregnanolone. The chain is Membrane progestin receptor alpha from Homo sapiens (Human).